A 592-amino-acid polypeptide reads, in one-letter code: Tetrathionate sensor histidine kinase TtrS (592 aa).

2 consecutive transmembrane segments (helical) span residues 11 to 31 (VLAAVGLLCHGAWAGTWNIGI) and 307 to 327 (VGGVILAFLLLTLNYIWVMLL). The region spanning 364–581 (GFAHELNQPL…VVTIHFLHEN (218 aa)) is the Histidine kinase domain. At His-367 the chain carries Phosphohistidine; by autocatalysis.

Post-translationally, autophosphorylated.

Its subcellular location is the cell inner membrane. The catalysed reaction is ATP + protein L-histidine = ADP + protein N-phospho-L-histidine.. Its function is as follows. Member of the two-component regulatory system TtrR/TtrS, which is required for synthesis of tetrathionate reductase. Probably functions as a sensor protein kinase which is autophosphorylated at a histidine residue in response to tetrathionate, and transfers its phosphate group to TtrR. During mice infection, the ability to use tetrathionate as an electron acceptor is a growth advantage for S.typhimurium over the competing microbiota in the lumen of the inflamed gut. This Salmonella typhimurium (strain LT2 / SGSC1412 / ATCC 700720) protein is Tetrathionate sensor histidine kinase TtrS (ttrS).